Consider the following 327-residue polypeptide: Phenylalanine--tRNA ligase alpha subunit (327 aa).

Glu252 provides a ligand contact to Mg(2+).

It belongs to the class-II aminoacyl-tRNA synthetase family. Phe-tRNA synthetase alpha subunit type 1 subfamily. In terms of assembly, tetramer of two alpha and two beta subunits. Mg(2+) serves as cofactor.

It is found in the cytoplasm. It catalyses the reaction tRNA(Phe) + L-phenylalanine + ATP = L-phenylalanyl-tRNA(Phe) + AMP + diphosphate + H(+). The protein is Phenylalanine--tRNA ligase alpha subunit of Serratia proteamaculans (strain 568).